The chain runs to 252 residues: 3-deoxy-manno-octulosonate cytidylyltransferase (252 aa).

Belongs to the KdsB family.

Its subcellular location is the cytoplasm. It carries out the reaction 3-deoxy-alpha-D-manno-oct-2-ulosonate + CTP = CMP-3-deoxy-beta-D-manno-octulosonate + diphosphate. The protein operates within nucleotide-sugar biosynthesis; CMP-3-deoxy-D-manno-octulosonate biosynthesis; CMP-3-deoxy-D-manno-octulosonate from 3-deoxy-D-manno-octulosonate and CTP: step 1/1. It functions in the pathway bacterial outer membrane biogenesis; lipopolysaccharide biosynthesis. Functionally, activates KDO (a required 8-carbon sugar) for incorporation into bacterial lipopolysaccharide in Gram-negative bacteria. This is 3-deoxy-manno-octulosonate cytidylyltransferase from Nitratidesulfovibrio vulgaris (strain ATCC 29579 / DSM 644 / CCUG 34227 / NCIMB 8303 / VKM B-1760 / Hildenborough) (Desulfovibrio vulgaris).